Here is a 205-residue protein sequence, read N- to C-terminus: SCO2-like protein RF_0960 (205 aa).

Cu cation is bound by residues Cys-82, Cys-86, and His-172.

Belongs to the SCO1/2 family.

The polypeptide is SCO2-like protein RF_0960 (Rickettsia felis (strain ATCC VR-1525 / URRWXCal2) (Rickettsia azadi)).